A 23-amino-acid chain; its full sequence is Coenzyme PQQ synthesis protein A (23 aa).

Residues 15 to 19 constitute a cross-link (pyrroloquinoline quinone (Glu-Tyr)); it reads EVTMY.

The protein belongs to the PqqA family.

It functions in the pathway cofactor biosynthesis; pyrroloquinoline quinone biosynthesis. Its function is as follows. Required for coenzyme pyrroloquinoline quinone (PQQ) biosynthesis. PQQ is probably formed by cross-linking a specific glutamate to a specific tyrosine residue and excising these residues from the peptide. The protein is Coenzyme PQQ synthesis protein A of Ectopseudomonas mendocina (strain ymp) (Pseudomonas mendocina).